We begin with the raw amino-acid sequence, 292 residues long: MSEIDWRKMPPLTALRAFAATASEGGFSAAARKLNVTHAAIAQQVRALEADLDVPLVWRDGKHLHLTPEGERFAKALADGFSMIQSAADMLRADTSEKALTVTVPPVFASEWLMPRLARFWKKHPDIPLSLLPDARLVDLKEIGANIGIRFGVGKWPGVISVFLTAAPQVVVAAPELLGGRKKLSLREMAMLPWVREGDWPEQMQLLESMGLVPAALKFVDFPNEELALAAAREGIGLHLETEALIVEDLKLGWLVKIHELTEESLGYYIVRPPGRLNPAAKIFIDWLKAEA.

In terms of domain architecture, HTH lysR-type spans 10-67 (PPLTALRAFAATASEGGFSAAARKLNVTHAAIAQQVRALEADLDVPLVWRDGKHLHLT). Residues 27 to 46 (FSAAARKLNVTHAAIAQQVR) constitute a DNA-binding region (H-T-H motif).

The protein belongs to the LysR transcriptional regulatory family.

In terms of biological role, functions as a low-light activator of ahcY expression (gene for S-adenosyl-L-homocysteine hydrolase) and as a high-light activator of an uncharacterized 21.6 kDa protein in the ahcY-hvrB intergenic region (orf5). It is also a negative regulator of its own expression. This Rhodobacter capsulatus (strain ATCC BAA-309 / NBRC 16581 / SB1003) protein is AhcY transcriptional activator HvrB (hvrB).